The chain runs to 222 residues: Sugar fermentation stimulation protein homolog (222 aa).

Belongs to the SfsA family.

This chain is Sugar fermentation stimulation protein homolog, found in Thermotoga maritima (strain ATCC 43589 / DSM 3109 / JCM 10099 / NBRC 100826 / MSB8).